The following is a 72-amino-acid chain: Large ribosomal subunit protein bL28 (72 aa).

The protein belongs to the bacterial ribosomal protein bL28 family.

The polypeptide is Large ribosomal subunit protein bL28 (Pelodictyon phaeoclathratiforme (strain DSM 5477 / BU-1)).